The primary structure comprises 409 residues: Phosphopentomutase (409 aa).

Mn(2+) is bound by residues Asp10, Asp308, His313, Asp349, His350, and His361.

It belongs to the phosphopentomutase family. Requires Mn(2+) as cofactor.

The protein localises to the cytoplasm. It catalyses the reaction 2-deoxy-alpha-D-ribose 1-phosphate = 2-deoxy-D-ribose 5-phosphate. It carries out the reaction alpha-D-ribose 1-phosphate = D-ribose 5-phosphate. It functions in the pathway carbohydrate degradation; 2-deoxy-D-ribose 1-phosphate degradation; D-glyceraldehyde 3-phosphate and acetaldehyde from 2-deoxy-alpha-D-ribose 1-phosphate: step 1/2. Its function is as follows. Isomerase that catalyzes the conversion of deoxy-ribose 1-phosphate (dRib-1-P) and ribose 1-phosphate (Rib-1-P) to deoxy-ribose 5-phosphate (dRib-5-P) and ribose 5-phosphate (Rib-5-P), respectively. The sequence is that of Phosphopentomutase from Buchnera aphidicola subsp. Schizaphis graminum (strain Sg).